Here is a 300-residue protein sequence, read N- to C-terminus: tRNA pseudouridine synthase B (300 aa).

D38 (nucleophile) is an active-site residue.

The protein belongs to the pseudouridine synthase TruB family. Type 1 subfamily.

It carries out the reaction uridine(55) in tRNA = pseudouridine(55) in tRNA. Its function is as follows. Responsible for synthesis of pseudouridine from uracil-55 in the psi GC loop of transfer RNAs. The sequence is that of tRNA pseudouridine synthase B from Anaplasma phagocytophilum (strain HZ).